Here is a 567-residue protein sequence, read N- to C-terminus: Arginine--tRNA ligase (567 aa).

Positions 128 to 138 (ANPTGPLHVGH) match the 'HIGH' region motif.

The protein belongs to the class-I aminoacyl-tRNA synthetase family. As to quaternary structure, monomer.

It localises to the cytoplasm. It catalyses the reaction tRNA(Arg) + L-arginine + ATP = L-arginyl-tRNA(Arg) + AMP + diphosphate. The sequence is that of Arginine--tRNA ligase from Acidovorax ebreus (strain TPSY) (Diaphorobacter sp. (strain TPSY)).